Reading from the N-terminus, the 402-residue chain is Alanine racemase (402 aa).

Residue lysine 34 is the Proton acceptor; specific for D-alanine of the active site. At lysine 34 the chain carries N6-(pyridoxal phosphate)lysine. Arginine 133 is a substrate binding site. Positions 226–271 (EVSYNLSYKEKFERNTPALATTVCINKCADVNTRLTYKVPLKGSYR) constitute an RPE1 insert domain. Catalysis depends on tyrosine 296, which acts as the Proton acceptor; specific for L-alanine. Methionine 344 contacts substrate.

This sequence belongs to the alanine racemase family. The cofactor is pyridoxal 5'-phosphate.

The enzyme catalyses L-alanine = D-alanine. The protein operates within amino-acid biosynthesis; D-alanine biosynthesis; D-alanine from L-alanine: step 1/1. Catalyzes the interconversion of L-alanine and D-alanine. May also act on other amino acids. The chain is Alanine racemase (alr) from Rickettsia typhi (strain ATCC VR-144 / Wilmington).